A 216-amino-acid chain; its full sequence is MRLSALLALASKVTLPPHYRYGMSPPGSVADKRKNPPWIRRRPVVVEPISDEDWYLFCGDTVEILEGKDAGKQGKVVQVIRQRNWVVVGGLNTHYRYIGKTMDYRGTMIPSEAPLLHRQVKLVDPMDRKPTEIEWRFTEAGERVRVSTRSGRIIPKPEFPRADGIVPETWIDGPKDTSVEDALERTYVPCLKTLQEEVMEAMGIKETRKYKKVYWY.

A mitochondrion-targeting transit peptide spans 1–9 (MRLSALLAL). Phosphoserine is present on serine 24. One can recognise a KOW domain in the interval 56-89 (LFCGDTVEILEGKDAGKQGKVVQVIRQRNWVVVG).

Belongs to the universal ribosomal protein uL24 family. In terms of assembly, component of the mitochondrial large ribosomal subunit (mt-LSU). Mature mammalian 55S mitochondrial ribosomes consist of a small (28S) and a large (39S) subunit. The 28S small subunit contains a 12S ribosomal RNA (12S mt-rRNA) and 30 different proteins. The 39S large subunit contains a 16S rRNA (16S mt-rRNA), a copy of mitochondrial valine transfer RNA (mt-tRNA(Val)), which plays an integral structural role, and 52 different proteins.

The protein localises to the mitochondrion. This chain is Large ribosomal subunit protein uL24m (MRPL24), found in Homo sapiens (Human).